We begin with the raw amino-acid sequence, 647 residues long: MSSSSSSLAAAAARKRALTEQRFSELSPALSPEVVKALKGGGFRRCTPVQAAAIPLLLSHKDVAVDAATGSGKTLAFVVPVVEILRRRPSPPKPHEVLGIIISPTRELSSQIYNVAQPFFATLKGVSSMLLVGGFDIKAELKKLEEEGANILVGTPGKLFDVMERLDTLNYKNLEILILDEADRLLDLGFQKQITSIISKLPKLRRTGLFSATQTEAVKELAKAGLRNPVRVEVKTEVKPTGKDGAQQELGPSKTPLGLRLEYMICEASNKSSQLVDFLVQNNGKKIMVYFATCACVDYWAIVLPLLDSLKGSPIIPYHGKMKQGPREKALASFSALSSGILVCTDVAARGLDIPHVDLIVQYDPPQDPNVFIHRAGRTARYDQEGDAIVFLLPKEDTYVEFLKRRGVPLTERECSTNAVDIVPQIRSAALEDRNVMEKGLTAFVSFVRAYKEHHCSYIFSWKDLEIGRLGMEYGLLQIPSMPEVKHHSLSLEGFTPVKDVDVTKIKYKDKAREKQRQKTLKRKAEELALRPEIEKRRKAPEKPEKPKRKKTGKQRQAVQTKEDMDELANEYRLLKKLKRGVIDEDEYEKLTGFGESDDDDSSDGGDSDLDERKERGNKVLKKIKQKGKAKGSRRFEGRSKQKTRRR.

The short motif at 23-51 (FSELSPALSPEVVKALKGGGFRRCTPVQA) is the Q motif element. Residues 54–232 (IPLLLSHKDV…KAGLRNPVRV (179 aa)) form the Helicase ATP-binding domain. 67–74 (AATGSGKT) lines the ATP pocket. The short motif at 180 to 183 (DEAD) is the DEAD box element. The Helicase C-terminal domain occupies 274 to 430 (QLVDFLVQNN…DIVPQIRSAA (157 aa)). A coiled-coil region spans residues 507–582 (KYKDKAREKQ…RLLKKLKRGV (76 aa)). Residues 512-545 (AREKQRQKTLKRKAEELALRPEIEKRRKAPEKPE) show a composition bias toward basic and acidic residues. Disordered regions lie at residues 512–565 (AREK…KEDM) and 590–647 (KLTG…TRRR). Residues 596 to 610 (ESDDDDSSDGGDSDL) are compositionally biased toward acidic residues. The span at 619 to 633 (KVLKKIKQKGKAKGS) shows a compositional bias: basic residues.

Belongs to the DEAD box helicase family. DDX55/SPB4 subfamily. Interacts with BRI1. Post-translationally, phosphorylated.

It catalyses the reaction ATP + H2O = ADP + phosphate + H(+). The protein is DEAD-box ATP-dependent RNA helicase 18 of Oryza sativa subsp. japonica (Rice).